A 350-amino-acid chain; its full sequence is Probable dual-specificity RNA methyltransferase RlmN (350 aa).

The region spanning 105–342 (ANGKNSVCIS…VRQSKGANIN (238 aa)) is the Radical SAM core domain. C112 and C345 are oxidised to a cystine. Residues C119, C123, and C126 each coordinate [4Fe-4S] cluster. S-adenosyl-L-methionine is bound by residues 166–167 (GE), S198, 221–223 (SLH), and N302. C345 (S-methylcysteine intermediate) is an active-site residue.

It belongs to the radical SAM superfamily. RlmN family. [4Fe-4S] cluster serves as cofactor.

The protein resides in the cytoplasm. The catalysed reaction is adenosine(2503) in 23S rRNA + 2 reduced [2Fe-2S]-[ferredoxin] + 2 S-adenosyl-L-methionine = 2-methyladenosine(2503) in 23S rRNA + 5'-deoxyadenosine + L-methionine + 2 oxidized [2Fe-2S]-[ferredoxin] + S-adenosyl-L-homocysteine. It carries out the reaction adenosine(37) in tRNA + 2 reduced [2Fe-2S]-[ferredoxin] + 2 S-adenosyl-L-methionine = 2-methyladenosine(37) in tRNA + 5'-deoxyadenosine + L-methionine + 2 oxidized [2Fe-2S]-[ferredoxin] + S-adenosyl-L-homocysteine. In terms of biological role, specifically methylates position 2 of adenine 2503 in 23S rRNA and position 2 of adenine 37 in tRNAs. This chain is Probable dual-specificity RNA methyltransferase RlmN, found in Endomicrobium trichonymphae.